The chain runs to 481 residues: MGDAESTKDRLLLPVERVENVTWSDLRDGSFTVELKRLIFFAAPMAAVVIAQFMLQIVSMMMVGHLGNLSLASASLASSFCNVTGFSFIIGLSCALDTLSGQAYGAKLYRKLGVQTYTAMFCLALVCLPLSLIWFNMEKLLLILGQDPSIAHEAGKYATWLIPGLFAYAVLQPLTRYFQNQSLITPLLITSYVVFCIHVPLCWFLVYNSGLGNLGGALAISLSNWLYAIFLGSFMYYSSACSETRAPLSMEIFDGIGEFFKYALPSAAMICLEWWSYELIILLSGLLPNPQLETSVLSVCLQTISTMYSIPLAIAAAASTRISNELGAGNSRAAHIVVYAAMSLAVIDALIVSMSLLIGRNLFGHIFSSDKETIDYVAKMAPLVSISLMLDALQGVLSGIARGCGWQHIGAYINLGAFYLWGIPIAASLAFWIHLKGVGLWIGIQAGAVLQTLLLALVTGCTNWESQADKARNRMALAYGT.

The next 12 helical transmembrane spans lie at 38-58, 76-96, 117-137, 154-174, 187-207, 214-234, 267-287, 296-316, 336-356, 380-400, 415-435, and 438-458; these read LIFF…LQIV, LASS…SCAL, YTAM…WFNM, AGKY…LQPL, LLIT…FLVY, LGGA…LGSF, AAMI…SGLL, VLSV…AIAA, IVVY…SMSL, MAPL…LSGI, LGAF…WIHL, and VGLW…LALV.

Belongs to the multi antimicrobial extrusion (MATE) (TC 2.A.66.1) family.

The protein localises to the membrane. The polypeptide is Protein DETOXIFICATION 12 (Arabidopsis thaliana (Mouse-ear cress)).